The chain runs to 767 residues: Photosystem I P700 chlorophyll a apoprotein A1 (767 aa).

Helical transmembrane passes span 72–95 (IFSAHFGHLAVIFIWLSGAFFHGA), 158–181 (LMALAIGALVMAGLMLNAGVFHYH), 197–221 (LNHHLAGLLGLGSLSWAGHVIHVSA), 305–323 (IAHHHVAIAVMFIVAGHMY), 364–387 (WHAQLAVNLAIGGSVSIIVAQHMY), 403–429 (IGLFTHHIWIGGFLIVGAGAHAAIAMV), 451–473 (AIISHLNWVCIWLGAHSFGLYIH), and 548–566 (FMVHHIHAFTIHVTVLILL). 2 residues coordinate [4Fe-4S] cluster: C590 and C599. The next 2 membrane-spanning stretches (helical) occupy residues 606–627 (HVFLGLFWMYNSLSIVIFHFSW) and 681–703 (TAAYGIMFLGAHFVFAFSLMFLF). Residue H692 coordinates chlorophyll a'. Chlorophyll a-binding residues include M700 and Y708. Residue W709 participates in phylloquinone binding. A helical transmembrane segment spans residues 741-761 (AVGVAHYLLGGIATTWAFFHA).

Belongs to the PsaA/PsaB family. As to quaternary structure, the PsaA/B heterodimer binds the P700 chlorophyll special pair and subsequent electron acceptors. PSI consists of a core antenna complex that captures photons, and an electron transfer chain that converts photonic excitation into a charge separation. The cyanobacterial PSI reaction center is composed of one copy each of PsaA,B,C,D,E,F,I,J,K,L,M and X, and forms trimeric complexes. The cofactor is PSI electron transfer chain: 5 chlorophyll a, 1 chlorophyll a', 2 phylloquinones and 3 4Fe-4S clusters. PSI core antenna: 90 chlorophyll a, 22 carotenoids, 3 phospholipids and 1 galactolipid. P700 is a chlorophyll a/chlorophyll a' dimer, A0 is one or more chlorophyll a, A1 is one or both phylloquinones and FX is a shared 4Fe-4S iron-sulfur center..

Its subcellular location is the cellular thylakoid membrane. It carries out the reaction reduced [plastocyanin] + hnu + oxidized [2Fe-2S]-[ferredoxin] = oxidized [plastocyanin] + reduced [2Fe-2S]-[ferredoxin]. PsaA and PsaB bind P700, the primary electron donor of photosystem I (PSI), as well as the electron acceptors A0, A1 and FX. PSI is a plastocyanin/cytochrome c6-ferredoxin oxidoreductase, converting photonic excitation into a charge separation, which transfers an electron from the donor P700 chlorophyll pair to the spectroscopically characterized acceptors A0, A1, FX, FA and FB in turn. Oxidized P700 is reduced on the lumenal side of the thylakoid membrane by plastocyanin or cytochrome c6. This Synechococcus sp. (strain CC9605) protein is Photosystem I P700 chlorophyll a apoprotein A1.